Here is a 506-residue protein sequence, read N- to C-terminus: Sporulation kinase D (506 aa).

A run of 2 helical transmembrane segments spans residues 17-37 (VKLY…FVYE) and 250-270 (LVLP…LVLY). The region spanning 298 to 505 (STAHEIRNPL…EVTITLPVSA (208 aa)) is the Histidine kinase domain. H301 bears the Phosphohistidine; by autocatalysis mark.

In terms of assembly, oligomerizes, probably forms homodimers; oligomerization is assisted by FloT. Interacts with FloT.

The protein localises to the cell membrane. The enzyme catalyses ATP + protein L-histidine = ADP + protein N-phospho-L-histidine.. Phosphorylates the sporulation-regulatory protein spo0F and, to a minor extent, is responsible for heterogeneous expression of spo0A during logarithmical growth. Also phosphorylates spo0A under biofilm growth conditions. The chain is Sporulation kinase D (kinD) from Bacillus subtilis (strain 168).